We begin with the raw amino-acid sequence, 732 residues long: Nephrocystin-1 (732 aa).

Positions 3-105 (ARRQRDPLQA…LQGLAVTISR (103 aa)) form a coiled coil. At tyrosine 46 the chain carries Phosphotyrosine; by FAK2. Disordered regions lie at residues 103-153 (ISRE…KWST) and 205-244 (TYLEPYSEEEEGQESSEEGSEEDVEAVDETADGAEVKQRT). Composition is skewed to acidic residues over residues 115-145 (TEEEEESESEDSEDSGGEEEDAEEEEEEKEE) and 210-236 (YSEEEEGQESSEEGSEEDVEAVDETAD). Phosphoserine; by CK2 occurs at positions 121, 123, and 126. Positions 127-150 (EDSGGEEEDAEEEEEEKEENESHK) form a coiled coil. In terms of domain architecture, SH3 spans 152-212 (STGEEYIAVG…PRTYLEPYSE (61 aa)). A Phosphotyrosine; by FAK2 modification is found at tyrosine 349. Position 721 is a phosphotyrosine; by SRC (tyrosine 721).

It belongs to the nephrocystin-1 family. Interacts with BCAR1, PTK2B/PYK2 and tensin. Interacts with INVS and NPHP3. Interacts with PACS1; the interaction is dependent on NPHP1 phosphorylation by CK2. Interacts with KIF7. Interacts with AHI1 and TNK2. Interacts with NPHP4 in a complex containing NPHP1, NPHP4 and RPGRIP1L. Interacts with IQCB1; the interaction likely requires additional interactors. Interacts with ANKS3. Interacts with SPATA7. Interacts with FLNA. Post-translationally, phosphorylation by CK2 is required for the interaction with PACS1 and the targeting to the base region of cilia. As to expression, widespread expression, with highest levels in pituitary gland, spinal cord, thyroid gland, testis, skeletal muscle, lymph node and trachea. Weakly expressed in heart, kidney and pancreas. Expressed in nasal epithelial cells (at protein level). Expressed in the renal collecting duct (at protein level).

It localises to the cell junction. The protein resides in the adherens junction. Its subcellular location is the cell projection. The protein localises to the cilium. It is found in the cytoplasm. It localises to the cytoskeleton. The protein resides in the cilium axoneme. Its subcellular location is the tight junction. Together with BCAR1 it may play a role in the control of epithelial cell polarity. Involved in the organization of apical junctions in kidney cells together with NPHP4 and RPGRIP1L/NPHP8. Does not seem to be strictly required for ciliogenesis. Seems to help to recruit PTK2B/PYK2 to cell matrix adhesions, thereby initiating phosphorylation of PTK2B/PYK2 and PTK2B/PYK2-dependent signaling. May play a role in the regulation of intraflagellar transport (IFT) during cilia assembly. Required for normal retina development. In connecting photoreceptor cilia influences the movement of some IFT proteins such as IFT88 and WDR19. Involved in spermatogenesis. This chain is Nephrocystin-1 (NPHP1), found in Homo sapiens (Human).